A 689-amino-acid chain; its full sequence is DNA-directed RNA polymerase subunit beta' (689 aa).

The Zn(2+) site is built by cysteine 76, cysteine 78, cysteine 94, and cysteine 97. Residues aspartate 496, aspartate 498, and aspartate 500 each coordinate Mg(2+).

It belongs to the RNA polymerase beta' chain family. RpoC1 subfamily. As to quaternary structure, in plastids the minimal PEP RNA polymerase catalytic core is composed of four subunits: alpha, beta, beta', and beta''. When a (nuclear-encoded) sigma factor is associated with the core the holoenzyme is formed, which can initiate transcription. Mg(2+) serves as cofactor. Zn(2+) is required as a cofactor.

Its subcellular location is the plastid. It localises to the chloroplast. It carries out the reaction RNA(n) + a ribonucleoside 5'-triphosphate = RNA(n+1) + diphosphate. Its function is as follows. DNA-dependent RNA polymerase catalyzes the transcription of DNA into RNA using the four ribonucleoside triphosphates as substrates. The chain is DNA-directed RNA polymerase subunit beta' from Illicium oligandrum (Star anise).